The primary structure comprises 447 residues: Argininosuccinate synthase (447 aa).

ATP-binding positions include 17–25 (AFSGGLDTS) and Ala43. Tyr99 lines the L-citrulline pocket. Residues Gly129 and Thr131 each contribute to the ATP site. L-aspartate contacts are provided by Thr131, Asn135, and Asp136. Asn135 is a binding site for L-citrulline. Position 136 (Asp136) interacts with ATP. Residues Arg139 and Ser192 each coordinate L-citrulline. Asp194 contributes to the ATP binding site. Residues Thr201, Glu203, and Glu280 each coordinate L-citrulline.

It belongs to the argininosuccinate synthase family. Type 2 subfamily. As to quaternary structure, homotetramer.

It is found in the cytoplasm. It carries out the reaction L-citrulline + L-aspartate + ATP = 2-(N(omega)-L-arginino)succinate + AMP + diphosphate + H(+). The protein operates within amino-acid biosynthesis; L-arginine biosynthesis; L-arginine from L-ornithine and carbamoyl phosphate: step 2/3. This Salmonella heidelberg (strain SL476) protein is Argininosuccinate synthase.